We begin with the raw amino-acid sequence, 326 residues long: tRNA(Ile)-lysidine synthase (326 aa).

33–38 (SGGPDS) is a binding site for ATP.

It belongs to the tRNA(Ile)-lysidine synthase family.

The protein localises to the cytoplasm. The catalysed reaction is cytidine(34) in tRNA(Ile2) + L-lysine + ATP = lysidine(34) in tRNA(Ile2) + AMP + diphosphate + H(+). Its function is as follows. Ligates lysine onto the cytidine present at position 34 of the AUA codon-specific tRNA(Ile) that contains the anticodon CAU, in an ATP-dependent manner. Cytidine is converted to lysidine, thus changing the amino acid specificity of the tRNA from methionine to isoleucine. This Novosphingobium aromaticivorans (strain ATCC 700278 / DSM 12444 / CCUG 56034 / CIP 105152 / NBRC 16084 / F199) protein is tRNA(Ile)-lysidine synthase.